The sequence spans 239 residues: Chaperone protein PapD (239 aa).

A signal peptide spans 1 to 21 (MIRKKILMAAIPLFVISGADA). A disulfide bond links Cys-228 and Cys-233.

This sequence belongs to the periplasmic pilus chaperone family. In terms of assembly, interacts with substrates PapG and PapK.

Its subcellular location is the periplasm. In terms of biological role, binds and caps interactive surfaces on P pilus subunits to prevent them from participating in non-productive interactions. Facilitates the import of P pilus subunits into the periplasm, probably also facilitates their folding. Chaperone-subunit complexes are then targeted to the PapC outer membrane usher where the chaperone must uncap from the subunits. Coexpression of this chaperone with individual, otherwise toxic, P pilus subunits (tested with PapA, PapE and PapG) suppresses their growth inhibitory phenotype. The polypeptide is Chaperone protein PapD (papD) (Escherichia coli).